The primary structure comprises 242 residues: Tryptophan synthase alpha chain (242 aa).

Catalysis depends on proton acceptor residues Glu31 and Asp42.

This sequence belongs to the TrpA family. In terms of assembly, tetramer of two alpha and two beta chains.

The catalysed reaction is (1S,2R)-1-C-(indol-3-yl)glycerol 3-phosphate + L-serine = D-glyceraldehyde 3-phosphate + L-tryptophan + H2O. The protein operates within amino-acid biosynthesis; L-tryptophan biosynthesis; L-tryptophan from chorismate: step 5/5. The alpha subunit is responsible for the aldol cleavage of indoleglycerol phosphate to indole and glyceraldehyde 3-phosphate. This chain is Tryptophan synthase alpha chain, found in Staphylococcus aureus (strain bovine RF122 / ET3-1).